A 233-amino-acid polypeptide reads, in one-letter code: Large ribosomal subunit protein uL1 (233 aa).

This sequence belongs to the universal ribosomal protein uL1 family. As to quaternary structure, part of the 50S ribosomal subunit.

Functionally, binds directly to 23S rRNA. The L1 stalk is quite mobile in the ribosome, and is involved in E site tRNA release. Protein L1 is also a translational repressor protein, it controls the translation of the L11 operon by binding to its mRNA. This chain is Large ribosomal subunit protein uL1, found in Shewanella baltica (strain OS185).